The following is a 316-amino-acid chain: Membrane protein UL148 (316 aa).

Positions 1-20 (MLRLLFTLVLLALYGPSVDA) are cleaved as a signal peptide. The helical transmembrane segment at 286 to 308 (FIVQYLNTLLITMMAAIWARVLI) threads the bilayer.

Interacts with host SEL1L.

The protein localises to the host endoplasmic reticulum membrane. Functionally, chaperone protein that plays an important role in HCMV tropism. Cooperates with UL116 to regulate the abundance of gH-gL complexes in virion. Favors the incorporation of gL into virions once UL116 has regulated the early folding steps of virion assembly. Interacts with the host ERAD machinery and slows gO decay which would otherwise be constitutively degraded. Reorganizes the host endoplasmic reticulum and activates the unfolded protein response. Additionally, plays a role in the evasion of antiviral immune response by down-regulating cell surface expression of host CD58. Mechanistically, interacts with host CD58 and retains its immature form intracellularly. The capacity to cause endoplasmic reticulum reorganization and the intracellular retention of host CD58 are functionally independent properties. The polypeptide is Membrane protein UL148 (UL148) (Human cytomegalovirus (strain Merlin) (HHV-5)).